The primary structure comprises 612 residues: MPEYRSKTSTHGRNMAGARALWRATGMKDGDFHKPIIAIANSFTQFVPGHVHLKDLGQLVAREIERVGGVAKEFDTIAVDDGIAMGHDGMLYSLPSREIIADSVEYMVNAHCADALVCISNCDKITPGMLMAALRLNIPTVFVSGGPMEAGKTKLADHNLDLIDAMVIAADDSASDEKVAEFERSACPTCGSCSGMFTANSMNCLTEALGLSLPGNGTVVATHADREQLFLRAGRVAVELCHRWYGGEDPTALPRGIATFEAFENAMTLDIAMGGSTNTILHLLAAAQEGEVPFGMRDIDRLSKRVPQLCKVAPNTPKYHIEDVHRAGGIMSILGELARGGLLHTNAATVHTRTLADAIAQWDVTQVDDDKVHTFYKAGPAGIPTQIAFSQATRWDTLDTDRSEGCIRDVAHAFSQEGGLAVLYGNIARDGCVVKTAGVDESIHVFEGNTRVYESQDSAVKGILADEVKAGDVVVIRYEGPKGGPGMQEMLYPTSYLKSKGLGKHCALLTDGRFSGGTSGLSIGHASPEAAAGGAIGLVRNGDKILIDIPKRSIDLLVSDEELAARRTEQDAKGWKPVEVRPRKVTTALKAYALLATSADKGAVRDKAMLDG.

D81 is a Mg(2+) binding site. Residue C122 participates in [2Fe-2S] cluster binding. Residues D123 and K124 each coordinate Mg(2+). K124 carries the N6-carboxylysine modification. Residue C193 participates in [2Fe-2S] cluster binding. E489 lines the Mg(2+) pocket. S515 functions as the Proton acceptor in the catalytic mechanism.

It belongs to the IlvD/Edd family. As to quaternary structure, homodimer. The cofactor is [2Fe-2S] cluster. Mg(2+) is required as a cofactor.

The enzyme catalyses (2R)-2,3-dihydroxy-3-methylbutanoate = 3-methyl-2-oxobutanoate + H2O. It catalyses the reaction (2R,3R)-2,3-dihydroxy-3-methylpentanoate = (S)-3-methyl-2-oxopentanoate + H2O. Its pathway is amino-acid biosynthesis; L-isoleucine biosynthesis; L-isoleucine from 2-oxobutanoate: step 3/4. It participates in amino-acid biosynthesis; L-valine biosynthesis; L-valine from pyruvate: step 3/4. Functionally, functions in the biosynthesis of branched-chain amino acids. Catalyzes the dehydration of (2R,3R)-2,3-dihydroxy-3-methylpentanoate (2,3-dihydroxy-3-methylvalerate) into 2-oxo-3-methylpentanoate (2-oxo-3-methylvalerate) and of (2R)-2,3-dihydroxy-3-methylbutanoate (2,3-dihydroxyisovalerate) into 2-oxo-3-methylbutanoate (2-oxoisovalerate), the penultimate precursor to L-isoleucine and L-valine, respectively. The chain is Dihydroxy-acid dehydratase from Xanthomonas campestris pv. campestris (strain 8004).